Here is a 430-residue protein sequence, read N- to C-terminus: Enolase (430 aa).

Gln-162 serves as a coordination point for (2R)-2-phosphoglycerate. The active-site Proton donor is Glu-204. Positions 242, 289, and 316 each coordinate Mg(2+). 4 residues coordinate (2R)-2-phosphoglycerate: Lys-341, Arg-370, Ser-371, and Lys-392. The active-site Proton acceptor is the Lys-341.

Belongs to the enolase family. Mg(2+) serves as cofactor.

The protein resides in the cytoplasm. It is found in the secreted. The protein localises to the cell surface. It carries out the reaction (2R)-2-phosphoglycerate = phosphoenolpyruvate + H2O. It functions in the pathway carbohydrate degradation; glycolysis; pyruvate from D-glyceraldehyde 3-phosphate: step 4/5. In terms of biological role, catalyzes the reversible conversion of 2-phosphoglycerate (2-PG) into phosphoenolpyruvate (PEP). It is essential for the degradation of carbohydrates via glycolysis. This is Enolase from Flavobacterium johnsoniae (strain ATCC 17061 / DSM 2064 / JCM 8514 / BCRC 14874 / CCUG 350202 / NBRC 14942 / NCIMB 11054 / UW101) (Cytophaga johnsonae).